The primary structure comprises 305 residues: UDP-3-O-acyl-N-acetylglucosamine deacetylase (305 aa).

Residues His79, His238, and Asp242 each coordinate Zn(2+). Catalysis depends on His265, which acts as the Proton donor.

This sequence belongs to the LpxC family. The cofactor is Zn(2+).

The catalysed reaction is a UDP-3-O-[(3R)-3-hydroxyacyl]-N-acetyl-alpha-D-glucosamine + H2O = a UDP-3-O-[(3R)-3-hydroxyacyl]-alpha-D-glucosamine + acetate. It functions in the pathway glycolipid biosynthesis; lipid IV(A) biosynthesis; lipid IV(A) from (3R)-3-hydroxytetradecanoyl-[acyl-carrier-protein] and UDP-N-acetyl-alpha-D-glucosamine: step 2/6. Its function is as follows. Catalyzes the hydrolysis of UDP-3-O-myristoyl-N-acetylglucosamine to form UDP-3-O-myristoylglucosamine and acetate, the committed step in lipid A biosynthesis. This chain is UDP-3-O-acyl-N-acetylglucosamine deacetylase, found in Shigella dysenteriae serotype 1 (strain Sd197).